The chain runs to 249 residues: tRNA pseudouridine synthase A (249 aa).

The active-site Nucleophile is the Asp53. Substrate is bound at residue Tyr111.

The protein belongs to the tRNA pseudouridine synthase TruA family. Homodimer.

It carries out the reaction uridine(38/39/40) in tRNA = pseudouridine(38/39/40) in tRNA. Formation of pseudouridine at positions 38, 39 and 40 in the anticodon stem and loop of transfer RNAs. This is tRNA pseudouridine synthase A from Streptococcus pneumoniae (strain 70585).